Consider the following 504-residue polypeptide: D-alanine--D-alanyl carrier protein ligase (504 aa).

Residue T152–S153 participates in ATP binding. Residue D197 coordinates D-alanine. N292–T297 contributes to the ATP binding site. V301 lines the D-alanine pocket. Residues D383, Y394–R397, and K492 contribute to the ATP site. A D-alanine-binding site is contributed by K492.

It belongs to the ATP-dependent AMP-binding enzyme family. DltA subfamily.

It is found in the cytoplasm. It carries out the reaction holo-[D-alanyl-carrier protein] + D-alanine + ATP = D-alanyl-[D-alanyl-carrier protein] + AMP + diphosphate. Its pathway is cell wall biogenesis; lipoteichoic acid biosynthesis. Its function is as follows. Catalyzes the first step in the D-alanylation of lipoteichoic acid (LTA), the activation of D-alanine and its transfer onto the D-alanyl carrier protein (Dcp) DltC. In an ATP-dependent two-step reaction, forms a high energy D-alanyl-AMP intermediate, followed by transfer of the D-alanyl residue as a thiol ester to the phosphopantheinyl prosthetic group of the Dcp. D-alanylation of LTA plays an important role in modulating the properties of the cell wall in Gram-positive bacteria, influencing the net charge of the cell wall. The chain is D-alanine--D-alanyl carrier protein ligase from Bacillus cereus (strain G9842).